We begin with the raw amino-acid sequence, 161 residues long: MANGNGTGAEVDAAPAINAMVQYTKDFSFENPNAPRSLGPQDKPPNIQIQVNVNAKQVAENDFEVNILLEGSAKTDADTLFKFELDYAGLFRLINIPQSDAHPVIMIECPRLLFPFARQIIADAVRSGGFPPLYIDPIDFAALYRQRMSQVAANEQAPTVA.

Belongs to the SecB family. As to quaternary structure, homotetramer, a dimer of dimers. One homotetramer interacts with 1 SecA dimer.

It localises to the cytoplasm. In terms of biological role, one of the proteins required for the normal export of preproteins out of the cell cytoplasm. It is a molecular chaperone that binds to a subset of precursor proteins, maintaining them in a translocation-competent state. It also specifically binds to its receptor SecA. The protein is Protein-export protein SecB of Methylocella silvestris (strain DSM 15510 / CIP 108128 / LMG 27833 / NCIMB 13906 / BL2).